Consider the following 145-residue polypeptide: Small ribosomal subunit protein uS12A (145 aa).

Position 64 is a hydroxyproline (Pro-64).

This sequence belongs to the universal ribosomal protein uS12 family.

The sequence is that of Small ribosomal subunit protein uS12A (RPS23A) from Naumovozyma castellii (Yeast).